The primary structure comprises 457 residues: Cysteine--tRNA ligase (457 aa).

Residue cysteine 28 participates in Zn(2+) binding. A 'HIGH' region motif is present at residues 30-40; it reads PTVYDTAHIGN. Residues cysteine 212, histidine 237, and glutamate 241 each coordinate Zn(2+). Positions 270-274 match the 'KMSKS' region motif; sequence KMSKS. An ATP-binding site is contributed by lysine 273.

This sequence belongs to the class-I aminoacyl-tRNA synthetase family. In terms of assembly, monomer. The cofactor is Zn(2+).

The protein localises to the cytoplasm. It catalyses the reaction tRNA(Cys) + L-cysteine + ATP = L-cysteinyl-tRNA(Cys) + AMP + diphosphate. This is Cysteine--tRNA ligase from Wolbachia pipientis wMel.